The chain runs to 361 residues: Mannonate dehydratase 1 (361 aa).

This sequence belongs to the mannonate dehydratase family. Requires Fe(2+) as cofactor. It depends on Mn(2+) as a cofactor.

The catalysed reaction is D-mannonate = 2-dehydro-3-deoxy-D-gluconate + H2O. The protein operates within carbohydrate metabolism; pentose and glucuronate interconversion. Functionally, catalyzes the dehydration of D-mannonate. This chain is Mannonate dehydratase 1 (uxuA1), found in Halalkalibacterium halodurans (strain ATCC BAA-125 / DSM 18197 / FERM 7344 / JCM 9153 / C-125) (Bacillus halodurans).